The chain runs to 872 residues: Alanine--tRNA ligase (872 aa).

Residues H566, H570, C668, and H672 each contribute to the Zn(2+) site.

This sequence belongs to the class-II aminoacyl-tRNA synthetase family. Zn(2+) is required as a cofactor.

The protein resides in the cytoplasm. It carries out the reaction tRNA(Ala) + L-alanine + ATP = L-alanyl-tRNA(Ala) + AMP + diphosphate. Functionally, catalyzes the attachment of alanine to tRNA(Ala) in a two-step reaction: alanine is first activated by ATP to form Ala-AMP and then transferred to the acceptor end of tRNA(Ala). Also edits incorrectly charged Ser-tRNA(Ala) and Gly-tRNA(Ala) via its editing domain. The chain is Alanine--tRNA ligase from Lactococcus lactis subsp. cremoris (strain SK11).